The following is a 443-amino-acid chain: Regulator of sigma E protease (443 aa).

His-21 lines the Zn(2+) pocket. Residue Glu-22 is part of the active site. Zn(2+) is bound at residue His-25. The chain crosses the membrane as a helical span at residues 98–118; that stretch reads FVIIAGPLANFIFAIFAYWVI. PDZ domains follow at residues 106–185 and 198–287; these read ANFI…SPFN and NWTF…TPVR. The next 2 helical transmembrane spans lie at 369–389 and 423–443; these read LVYFLSFMALISVNLGIMNLF and IGAALLLSLTVFALFNDFLRL.

It belongs to the peptidase M50B family. Interacts with RseA. Requires Zn(2+) as cofactor.

It is found in the cell inner membrane. A site-2 regulated intramembrane protease (S2P) that cleaves a peptide bond in the transmembrane region of RseA. Part of a regulated intramembrane proteolysis (RIP) cascade. Acts on DegS-cleaved RseA to release the cytoplasmic domain of RseA. This provides the cell with sigma-E (RpoE) activity through the proteolysis of RseA. This Haemophilus influenzae (strain ATCC 51907 / DSM 11121 / KW20 / Rd) protein is Regulator of sigma E protease (rsep).